Here is a 127-residue protein sequence, read N- to C-terminus: Small ribosomal subunit protein eS8 (127 aa).

It belongs to the eukaryotic ribosomal protein eS8 family. As to quaternary structure, part of the 30S ribosomal subunit.

In Pyrococcus abyssi (strain GE5 / Orsay), this protein is Small ribosomal subunit protein eS8 (rps8e).